The following is a 295-amino-acid chain: Diaminopimelate epimerase (295 aa).

2 residues coordinate substrate: Asn13 and Asn69. Catalysis depends on Cys78, which acts as the Proton donor. Residues 79 to 80 (GN), Asn173, Asn212, and 230 to 231 (ER) each bind substrate. Cys239 serves as the catalytic Proton acceptor. 240–241 (GT) contacts substrate.

The protein belongs to the diaminopimelate epimerase family. In terms of assembly, homodimer.

It localises to the cytoplasm. The enzyme catalyses (2S,6S)-2,6-diaminopimelate = meso-2,6-diaminopimelate. The protein operates within amino-acid biosynthesis; L-lysine biosynthesis via DAP pathway; DL-2,6-diaminopimelate from LL-2,6-diaminopimelate: step 1/1. Its function is as follows. Catalyzes the stereoinversion of LL-2,6-diaminopimelate (L,L-DAP) to meso-diaminopimelate (meso-DAP), a precursor of L-lysine. This Methanococcus aeolicus (strain ATCC BAA-1280 / DSM 17508 / OCM 812 / Nankai-3) protein is Diaminopimelate epimerase.